Reading from the N-terminus, the 483-residue chain is Cysteine proteinase 1, mitochondrial (483 aa).

The N-terminal 30 residues, 1–30 (MLPTSVSRSLYLKTFRSHLLRAPQIVLKRM), are a transit peptide targeting the mitochondrion. Residues Cys-102, His-398, and Asn-421 contribute to the active site. Position 483 (Lys-483) is a propeptide, removed in mature form; by autocatalysis.

This sequence belongs to the peptidase C1 family. Homohexamer. Binds to nucleic acids. Binds single-stranded DNA and RNA with higher affinity than double-stranded DNA. Post-translationally, the N-terminus of isoform Cytoplasmic is blocked.

The protein resides in the mitochondrion. The protein localises to the cytoplasm. The enzyme catalyses Inactivates bleomycin B2 (a cytotoxic glycometallopeptide) by hydrolysis of a carboxyamide bond of beta-aminoalanine, but also shows general aminopeptidase activity. The specificity varies somewhat with source, but amino acid arylamides of Met, Leu and Ala are preferred.. Its activity is regulated as follows. Inhibited by E64, a specific inhibitor of cysteine proteases, N-ethylmaleimide, iodacetamide, and mercury and zinc ions. Functionally, the normal physiological role of the enzyme is unknown, but it is not essential for the viability of yeast cells. Has aminopeptidase activity, shortening substrate peptides sequentially by 1 amino acid. Has bleomycin hydrolase activity, which can protect the cell from the toxic effects of bleomycin. Has homocysteine-thiolactonase activity, protecting the cell against homocysteine toxicity. Acts as a repressor in the GAL4 regulatory system, but this does not require either the peptidase or nucleic acid-binding activities. The protein is Cysteine proteinase 1, mitochondrial (LAP3) of Saccharomyces cerevisiae (strain JAY291) (Baker's yeast).